The following is a 210-amino-acid chain: Small ribosomal subunit protein uS4 (210 aa).

The S4 RNA-binding domain maps to 99–161; the sequence is RRLDSVIYRM…SKNNATILSA (63 aa).

The protein belongs to the universal ribosomal protein uS4 family. Part of the 30S ribosomal subunit. Contacts protein S5. The interaction surface between S4 and S5 is involved in control of translational fidelity.

One of the primary rRNA binding proteins, it binds directly to 16S rRNA where it nucleates assembly of the body of the 30S subunit. Functionally, with S5 and S12 plays an important role in translational accuracy. The sequence is that of Small ribosomal subunit protein uS4 from Solibacter usitatus (strain Ellin6076).